A 682-amino-acid chain; its full sequence is Potassium-transporting ATPase ATP-binding subunit (682 aa).

The next 4 helical transmembrane spans lie at 34 to 54 (PVMF…LAMV), 58 to 78 (IAGS…TVLF), 219 to 239 (IALT…TATL), and 254 to 274 (VLVA…LSAI). The active-site 4-aspartylphosphate intermediate is the D307. ATP is bound by residues D344, E348, 377–384 (FTAQSRMS), and K395. Positions 518 and 522 each coordinate Mg(2+). Helical transmembrane passes span 588–608 (FAII…LNVM), 616–636 (AILS…PLAL), and 662–682 (LVVP…LGLA).

It belongs to the cation transport ATPase (P-type) (TC 3.A.3) family. Type IA subfamily. As to quaternary structure, the system is composed of three essential subunits: KdpA, KdpB and KdpC.

It localises to the cell inner membrane. It catalyses the reaction K(+)(out) + ATP + H2O = K(+)(in) + ADP + phosphate + H(+). Part of the high-affinity ATP-driven potassium transport (or Kdp) system, which catalyzes the hydrolysis of ATP coupled with the electrogenic transport of potassium into the cytoplasm. This subunit is responsible for energy coupling to the transport system and for the release of the potassium ions to the cytoplasm. The chain is Potassium-transporting ATPase ATP-binding subunit from Salmonella enteritidis PT4 (strain P125109).